We begin with the raw amino-acid sequence, 139 residues long: ATP synthase epsilon chain (139 aa).

It belongs to the ATPase epsilon chain family. In terms of assembly, F-type ATPases have 2 components, CF(1) - the catalytic core - and CF(0) - the membrane proton channel. CF(1) has five subunits: alpha(3), beta(3), gamma(1), delta(1), epsilon(1). CF(0) has three main subunits: a, b and c.

The protein resides in the cell inner membrane. Its function is as follows. Produces ATP from ADP in the presence of a proton gradient across the membrane. This Pseudomonas putida (strain GB-1) protein is ATP synthase epsilon chain.